The primary structure comprises 98 residues: Gas vesicle protein A (98 aa).

It belongs to the gas vesicle GvpA family. The gas vesicle shell is 2 nm thick and consists of a single layer of this protein. It forms helical ribs nearly perpendicular to the long axis of the vesicle.

The protein resides in the gas vesicle shell. In terms of biological role, gas vesicles are hollow, gas filled proteinaceous nanostructures found in some microorganisms. During planktonic growth they allow positioning of the organism at a favorable depth for light or nutrient acquisition. GvpA forms the protein shell. The sequence is that of Gas vesicle protein A from Koribacter versatilis (strain Ellin345).